The sequence spans 159 residues: Phosphopantetheine adenylyltransferase (159 aa).

Residue S9 coordinates substrate. ATP is bound by residues 9 to 10 (SF) and H17. Substrate-binding residues include K41, L73, and K87. Residues 88 to 90 (GLR), E98, and 123 to 129 (YGYLSSS) each bind ATP.

It belongs to the bacterial CoaD family. As to quaternary structure, homohexamer. Mg(2+) serves as cofactor.

The protein localises to the cytoplasm. It catalyses the reaction (R)-4'-phosphopantetheine + ATP + H(+) = 3'-dephospho-CoA + diphosphate. It participates in cofactor biosynthesis; coenzyme A biosynthesis; CoA from (R)-pantothenate: step 4/5. Reversibly transfers an adenylyl group from ATP to 4'-phosphopantetheine, yielding dephospho-CoA (dPCoA) and pyrophosphate. This Thermoanaerobacter pseudethanolicus (strain ATCC 33223 / 39E) (Clostridium thermohydrosulfuricum) protein is Phosphopantetheine adenylyltransferase.